Here is a 300-residue protein sequence, read N- to C-terminus: Protein Bel-1 (300 aa).

Residues 1-50 (MDSYEKEESVASTSGIQDLQTLSELVGPENAGEGELTIAEEPEENPRRPR) form a disordered region. Residues 10 to 23 (VASTSGIQDLQTLS) show a composition bias toward polar residues. A DNA-binding region spans residues 89–200 (SKSLCKRLIL…SEGPKPRPRH (112 aa)). A disordered region spans residues 209-244 (FEKHHKPRQKRPRRRSIDNESCASSSDTMANEPGSL). A compositionally biased stretch (basic residues) spans 211–222 (KHHKPRQKRPRR). The Nuclear localization signal motif lies at 214–223 (KPRQKRPRRR). The tract at residues 224-300 (SIDNESCASS…PSGSGEHSVL (77 aa)) is transactivation domain. The segment covering 227–237 (NESCASSSDTM) has biased composition (polar residues).

In terms of assembly, homodimer or homomultimer. Forms complexes with the host nuclear factors NFIA, NFIB, NFIC or NFIX.

The protein resides in the host nucleus. Functionally, transcriptional transactivator that activates the viral internal promoter (IP), thereby enhancing its own expression. This transactivation is repressed by nuclear factor I. Also transactivates the long terminal repeat (LTR) promoter, thereby inducing structural gene expression, initiating the late phase of infection. It is therefore a key regulator of viral gene expression. It directly binds to and activates DNA target sites of viral promoters and those of distinct cellular genes. Required for viral replication. This chain is Protein Bel-1 (bel1), found in Human spumaretrovirus (SFVcpz(hu)).